A 330-amino-acid polypeptide reads, in one-letter code: Lipoyl synthase (330 aa).

C77, C82, C88, C103, C107, C110, and S317 together coordinate [4Fe-4S] cluster. Residues 89–306 enclose the Radical SAM core domain; that stretch reads FNHGTATFMI…RSEAERMGFE (218 aa).

It belongs to the radical SAM superfamily. Lipoyl synthase family. Requires [4Fe-4S] cluster as cofactor.

Its subcellular location is the cytoplasm. It catalyses the reaction [[Fe-S] cluster scaffold protein carrying a second [4Fe-4S](2+) cluster] + N(6)-octanoyl-L-lysyl-[protein] + 2 oxidized [2Fe-2S]-[ferredoxin] + 2 S-adenosyl-L-methionine + 4 H(+) = [[Fe-S] cluster scaffold protein] + N(6)-[(R)-dihydrolipoyl]-L-lysyl-[protein] + 4 Fe(3+) + 2 hydrogen sulfide + 2 5'-deoxyadenosine + 2 L-methionine + 2 reduced [2Fe-2S]-[ferredoxin]. It participates in protein modification; protein lipoylation via endogenous pathway; protein N(6)-(lipoyl)lysine from octanoyl-[acyl-carrier-protein]: step 2/2. Functionally, catalyzes the radical-mediated insertion of two sulfur atoms into the C-6 and C-8 positions of the octanoyl moiety bound to the lipoyl domains of lipoate-dependent enzymes, thereby converting the octanoylated domains into lipoylated derivatives. This is Lipoyl synthase from Actinobacillus pleuropneumoniae serotype 5b (strain L20).